Consider the following 238-residue polypeptide: Uridylate kinase (238 aa).

12–15 (KLSG) is a binding site for ATP. Residue glycine 54 participates in UMP binding. Residues glycine 55 and arginine 59 each contribute to the ATP site. UMP contacts are provided by residues aspartate 74 and 135–142 (TGNPYFTT). Threonine 162, asparagine 163, tyrosine 168, and aspartate 171 together coordinate ATP.

Belongs to the UMP kinase family. Homohexamer.

Its subcellular location is the cytoplasm. The catalysed reaction is UMP + ATP = UDP + ADP. Its pathway is pyrimidine metabolism; CTP biosynthesis via de novo pathway; UDP from UMP (UMPK route): step 1/1. With respect to regulation, inhibited by UTP. Functionally, catalyzes the reversible phosphorylation of UMP to UDP. The polypeptide is Uridylate kinase (Rhodopseudomonas palustris (strain ATCC BAA-98 / CGA009)).